Consider the following 98-residue polypeptide: Peptides MS9.1 (98 aa).

Residues 1-21 (MKQSLILAVLCLALVFATIEA) form the signal peptide. Residues 22–27 (KPKADP) constitute a propeptide that is removed on maturation. 2 disulfide bridges follow: Cys34/Cys46 and Cys37/Cys52. 2 consecutive propeptides follow at residues 63–64 (DP) and 92–98 (DPVRDAE).

Belongs to the sea anemone BBH family.

It is found in the secreted. It localises to the nematocyst. Its function is as follows. Acts as a positive modulator of mammalian TRPA1, a non-selective cation channel involved in detection of pain, in vitro yet has an analgesic and anti-inflammatory effect in vivo. The protein is Peptides MS9.1 of Metridium senile (Brown sea anemone).